A 77-amino-acid polypeptide reads, in one-letter code: Ras-related C3 botulinum toxin substrate 1 (77 aa).

GTP is bound at residue 22 to 24 (KLD). K53 is covalently cross-linked (Glycyl lysine isopeptide (Lys-Gly) (interchain with G-Cter in ubiquitin)). Position 65-66 (65-66 (AL)) interacts with GTP.

This sequence belongs to the small GTPase superfamily. Rho family. In terms of assembly, interacts with NISCH. Interacts with PIP5K1A. Interacts with the GTP-bound form of RAB7A. Interacts with SRGAP2. Interacts with CYFIP1/SRA-1. Interacts with PLXNB3. Interacts with ARHGDIA; the interaction is induced by SEMA5A, mediated through PLXNB3 and inactivates and stabilizes RAC1. Interacts (GTP-bound form preferentially) with PKN2 (via the REM repeats); the interaction stimulates autophosphorylation and phosphorylation of PKN2. Interacts with the GEF proteins PREX1, RASGRF2, FARP1, FARP2, DOCK1, DOCK2 and DOCK7, which promote the exchange between GDP and GTP, and therefore activate it. Interacts with PARD6A, PARD6B and PARD6G in a GTP-dependent manner. Part of a quaternary complex containing PARD3, some PARD6 protein (PARD6A, PARD6B or PARD6G) and some atypical PKC protein (PRKCI or PRKCZ), which plays a central role in epithelial cell polarization. Found in a trimeric complex composed of DOCK1 and ELMO1, which plays a central role in phagocytosis of apoptotic cells. Interacts with RALBP1 via its effector domain. Interacts with PLXNB1. Part of a complex with MAP2K3, MAP3K3, CCM2 and DEF6. Interacts with BAIAP2, BAIAP2L1 and DEF6. Interacts with Y.pseudotuberculosis YPKA and PLCB2. Interacts with NOXA1. Interacts with ARHGEF2. Interacts with TBC1D2. Interacts with UNKL. Interacts with USP6. Interacts with SPATA13. Interacts with ARHGEF16; mediates activation of RAC1 by EPHA2. Interacts with ITGB4. Interacts with S100A8 and calprotectin (S100A8/9). Interacts with PACSIN2. Interacts (when active) with PPP5C (via TPR repeats); activates PPP5C phosphatase activity and translocates PPP5C to the cell membrane. Interacts with RAPH1 (via Ras associating and PH domains). Interacts with MTSS2 (via IMD domain); this interaction may be important to potentiate PDGF-induced RAC1 activation. Interacts with PAK2. Interacts (GTP-bound form) with SH3RF1 and SH3RF3. Found in a complex with SH3RF1, MAPK8IP1/JIP1, MAP3K11/MLK3, MAP2K7/MKK7 and MAPK8/JNK1. Interacts (both active GTP- or inactive GDP-bound forms) with SH3RF2. Interacts (GTP-bound form preferentially) with CYRIB. Interacts with DOCK4 (via DOCKER domain); functions as a guanine nucleotide exchange factor (GEF) for RAC1. Interacts with GARRE1. Interacts with RAP1GDS1. May interact with ARHGAP36. Interacts with DSG3; the interaction is required for DSG3 translocation to cell-cell junctions, organization of cortical F-actin bundles and actin anchoring at cell-cell junctions. Component of the phagocyte NADPH oxidase complex composed of an obligatory core heterodimer formed by the membrane proteins CYBA and CYBB and the cytosolic regulatory subunits NCF1/p47-phox, NCF2/p67-phox, NCF4/p40-phox and the small GTPase RAC1 or RAC2. Interacts with NCF2. Post-translationally, the N-terminus is blocked. In terms of processing, GTP-bound active form is ubiquitinated by HACE1, leading to its degradation by the proteasome.

It is found in the cytoplasm. The protein localises to the membrane. Its subcellular location is the melanosome. The protein resides in the cell projection. It localises to the lamellipodium. It is found in the dendrite. The protein localises to the synapse. Its subcellular location is the nucleus. It catalyses the reaction GTP + H2O = GDP + phosphate + H(+). With respect to regulation, regulated by guanine nucleotide exchange factors (GEFs) which promote the exchange of bound GDP for free GTP, GTPase activating proteins (GAPs) which increase the GTP hydrolysis activity, and GDP dissociation inhibitors which inhibit the dissociation of the nucleotide from the GTPase. GTP hydrolysis is stimulated by ARHGAP30. Plasma membrane-associated small GTPase which cycles between active GTP-bound and inactive GDP-bound states. In its active state, binds to a variety of effector proteins to regulate cellular responses such as secretory processes, phagocytosis of apoptotic cells, epithelial cell polarization, neurons adhesion, migration and differentiation, and growth-factor induced formation of membrane ruffles. Rac1 p21/rho GDI heterodimer is the active component of the cytosolic factor sigma 1, which is involved in stimulation of the NADPH oxidase activity in macrophages. Essential for the SPATA13-mediated regulation of cell migration and adhesion assembly and disassembly. Stimulates PKN2 kinase activity. In concert with RAB7A, plays a role in regulating the formation of RBs (ruffled borders) in osteoclasts. In podocytes, promotes nuclear shuttling of NR3C2; this modulation is required for a proper kidney functioning. Required for atypical chemokine receptor ACKR2-induced LIMK1-PAK1-dependent phosphorylation of cofilin (CFL1) and for up-regulation of ACKR2 from endosomal compartment to cell membrane, increasing its efficiency in chemokine uptake and degradation. In neurons, is involved in dendritic spine formation and synaptic plasticity. In hippocampal neurons, involved in spine morphogenesis and synapse formation, through local activation at synapses by guanine nucleotide exchange factors (GEFs), such as ARHGEF6/ARHGEF7/PIX. In synapses, seems to mediate the regulation of F-actin cluster formation performed by SHANK3. In neurons, plays a crucial role in regulating GABA(A) receptor synaptic stability and hence GABAergic inhibitory synaptic transmission through its role in PAK1 activation and eventually F-actin stabilization. Required for DSG3 translocation to cell-cell junctions, DSG3-mediated organization of cortical F-actin bundles and anchoring of actin at cell junctions; via interaction with DSG3. Subunit of the phagocyte NADPH oxidase complex that mediates the transfer of electrons from cytosolic NADPH to O2 to produce the superoxide anion (O2(-)). This chain is Ras-related C3 botulinum toxin substrate 1, found in Cavia porcellus (Guinea pig).